The primary structure comprises 152 residues: Nucleoside diphosphate kinase A (152 aa).

Lys-12, Phe-60, Arg-88, and Thr-94 together coordinate ATP. A Glycyl lysine isopeptide (Lys-Gly) (interchain with G-Cter in ubiquitin) cross-link involves residue Lys-100. ATP contacts are provided by Arg-105 and Asn-115. The Pros-phosphohistidine intermediate role is filled by His-118. A phosphoserine mark is found at Ser-120, Ser-122, and Ser-125.

It belongs to the NDK family. In terms of assembly, hexamer of two different chains: An and B (A6, A5B, A4B2, A3B3, A2B4, AB5, B6). Interacts with PRUNE1. Component of the SET complex, composed of at least ANP32A, APEX1, HMGB2, NME1, SET and TREX1. Within this complex, interacts directly with SET. Also interacts with TREX1, but only following translocation to the nucleus. Mg(2+) serves as cofactor.

The protein localises to the cytoplasm. It localises to the nucleus. It catalyses the reaction a 2'-deoxyribonucleoside 5'-diphosphate + ATP = a 2'-deoxyribonucleoside 5'-triphosphate + ADP. The enzyme catalyses a ribonucleoside 5'-diphosphate + ATP = a ribonucleoside 5'-triphosphate + ADP. Its activity is regulated as follows. Autophosphorylation at His-118 increases serine/threonine protein kinase activity of the enzyme. Interaction with the SET complex inhibits exonuclease activity. In terms of biological role, major role in the synthesis of nucleoside triphosphates other than ATP. The ATP gamma phosphate is transferred to the NDP beta phosphate via a ping-pong mechanism, using a phosphorylated active-site intermediate. Possesses nucleoside-diphosphate kinase, serine/threonine-specific protein kinase, geranyl and farnesyl pyrophosphate kinase, histidine protein kinase and 3'-5' exonuclease activities. Involved in cell proliferation, differentiation and development, signal transduction, G protein-coupled receptor endocytosis, and gene expression. Required for neural development including neural patterning and cell fate determination. During GZMA-mediated cell death, works in concert with TREX1. NME1 nicks one strand of DNA and TREX1 removes bases from the free 3' end to enhance DNA damage and prevent DNA end reannealing and rapid repair. This is Nucleoside diphosphate kinase A (NME1) from Canis lupus familiaris (Dog).